The primary structure comprises 263 residues: Thiamine thiazole synthase (263 aa).

Residues serine 36, glutamate 55–arginine 56, glycine 63, valine 127, and histidine 157–aspartate 159 each bind NAD(+). The Fe cation site is built by aspartate 159 and histidine 174. Methionine 228 lines the NAD(+) pocket. Position 238 (arginine 238) interacts with glycine.

Belongs to the THI4 family. As to quaternary structure, homooctamer; tetramer of dimers. The cofactor is Fe(2+).

The enzyme catalyses hydrogen sulfide + glycine + NAD(+) = ADP-5-ethyl-4-methylthiazole-2-carboxylate + nicotinamide + 3 H2O + H(+). The protein operates within cofactor biosynthesis; thiamine diphosphate biosynthesis. Functionally, involved in the biosynthesis of the thiazole moiety of thiamine. Catalyzes the conversion of NAD and glycine to adenosine diphosphate 5-(2-hydroxyethyl)-4-methylthiazole-2-carboxylate (ADT), an adenylated thiazole intermediate, using free sulfide as a source of sulfur. This chain is Thiamine thiazole synthase, found in Solidesulfovibrio magneticus (strain ATCC 700980 / DSM 13731 / RS-1) (Desulfovibrio magneticus).